The following is a 430-amino-acid chain: MGQSVVVLGAQWGDEGKGKIVDLLTEEIGAVVRFQGGHNAGHTLVINGKKTVLHLIPSGILRDDALCLIGNGVVISPAALIKEVSELEDAGVEVRSRLKISPAAPLIMPYHIALDQAREKAAGGKAIGTTGRGIGPAYEDKVARRGIRIADLHYPPQLEELLRTALDYHNFVLTKYLGVEAVDFQKTYDEALAFGDYVQPMKSDVAGILHDLRKQGKRVLFEGAQGALLDIDHGTYPYVTSSNTTVGGALAGTGVGADAIDYVLGIAKAYATRVGGGPFPTELDDEVGQGIRDRGAEYGASTGRPRRCGWMDIVALKRAVAINGISGLCITKLDVLDGMEKLKVCIAYEYRGKRTEYAPLDAQGWEECTPVYLEFPGWTENTHGITEWDKLPVAARAYLRALEELAGCPISIVSTGPDRDHTMVLQDPFA.

GTP-binding positions include 13-19 and 41-43; these read GDEGKGK and GHT. D14 (proton acceptor) is an active-site residue. Positions 14 and 41 each coordinate Mg(2+). IMP-binding positions include 14 to 17, 39 to 42, T130, R144, Q225, T240, and R304; these read DEGK and NAGH. The active-site Proton donor is the H42. 300–306 serves as a coordination point for substrate; the sequence is ASTGRPR. GTP contacts are provided by residues R306, 332–334, and 414–416; these read KLD and STG.

This sequence belongs to the adenylosuccinate synthetase family. As to quaternary structure, homodimer. Mg(2+) is required as a cofactor.

The protein resides in the cytoplasm. It carries out the reaction IMP + L-aspartate + GTP = N(6)-(1,2-dicarboxyethyl)-AMP + GDP + phosphate + 2 H(+). It functions in the pathway purine metabolism; AMP biosynthesis via de novo pathway; AMP from IMP: step 1/2. Its function is as follows. Plays an important role in the de novo pathway of purine nucleotide biosynthesis. Catalyzes the first committed step in the biosynthesis of AMP from IMP. This Xanthomonas oryzae pv. oryzae (strain PXO99A) protein is Adenylosuccinate synthetase.